Reading from the N-terminus, the 90-residue chain is Barrier-to-autointegration factor (90 aa).

Residues Ser2 and Ser3 each carry the phosphoserine modification. Thr4 carries the phosphothreonine modification. Position 5 is a phosphoserine (Ser5).

Belongs to the BAF family. Homodimer.

Its subcellular location is the nucleus. The protein resides in the chromosome. It is found in the nucleus envelope. It localises to the cytoplasm. In terms of biological role, non-specific DNA-binding protein that plays key roles in mitotic nuclear reassembly, chromatin organization, DNA damage response, gene expression and intrinsic immunity against foreign DNA. Contains two non-specific double-stranded DNA (dsDNA)-binding sites which promote DNA cross-bridging. Plays a key role in nuclear membrane reformation at the end of mitosis by driving formation of a single nucleus in a spindle-independent manner. Transiently cross-bridges anaphase chromosomes via its ability to bridge distant DNA sites, leading to the formation of a dense chromatin network at the chromosome ensemble surface that limits membranes to the surface. Also acts as a negative regulator of innate immune activation by restricting CGAS activity toward self-DNA upon acute loss of nuclear membrane integrity. Outcompetes CGAS for DNA-binding, thereby preventing CGAS activation and subsequent damaging autoinflammatory responses. Also involved in DNA damage response; acts by inhibiting the ADP-ribosyltransferase activity of PARP1. Involved in the recognition of exogenous dsDNA in the cytosol: associates with exogenous dsDNA immediately after its appearance in the cytosol at endosome breakdown and is required to avoid autophagy. In Danio rerio (Zebrafish), this protein is Barrier-to-autointegration factor (banf1).